The sequence spans 778 residues: MAATKKSTATAAHQIIPSQPTSMSADKFLFSCLQVFVLFFEWARSFLLSTQSRLSAVPAENARLEPSKPISEEEESVIEKPASSITPRYSNLVDPSTYNDLGLCSALPLRVHKFAHLADKGALRAQEDWKRLVGPIRNFTGCLSPRFNGIAVAVPECIPERLEIVTYANEFAFLHDDILDNVGKEEGDHENNEMAAGFGSVLNPADNVKMSASGKSQMQAKLILELLAINEPQAMVLLKCWEGLVKGESGSQHFNFQRLDEYLPHRVINLGQTFWFGIITFAMGLTISPDEAEKANNITDPAYATLALANDYFSWEKEYIEFKQNPTSDDMANAIWIIMKEHSVDLEEAKKICQDKIRESCEEYVRRHRQFEREATGKVSTDLLRYLAALEFSISGNVVWSQYTHRYNFHKPAAKENEDTDDEGAKSDDSKTTLNDSTDSTVVDVKTPATSGLLSSANDVLMSRTAKSLVGPILDVQLPELPDKVVLSPSQYVKSLPSKKVRHHAIDALNIWFNVPEAELEVIKEAIDLLHNSSLMLDDIEDDSPLRRGFPSTHVVYGISQTINSANYLYVMALEMTQRLNSPACLNVFIDELKRLHIGQSLDLYWTANVQCPSLEEYLKMVDYKTGGLFQMVAKLMALKSPMAGRVPDLSNMTTLFGRYFQIRDDYQNLMSEEYTNQKGWCEDLDEGKFSLPLIHSLTTKPNVRLQAMLHQRLINGKMTFEMKKLALDHLAETKSLEYTKEMLGYMYTQLQKEVDFLERQTGSENFLLRLLLKRLQV.

A terpene cyclase region spans residues 1 to 414 (MAATKKSTAT…HRYNFHKPAA (414 aa)). Mg(2+) is bound by residues Asp176 and Asp180. Residue Asp176 participates in substrate binding. The DDXXD 1 signature appears at 176–180 (DDILD). Substrate contacts are provided by residues 266–269 (RVIN), Asn310, 314–318 (SWEKE), and 406–407 (RY). Residues 310 to 318 (NDYFSWEKE) carry the NSE/DTE motif. Residues 414–431 (AKENEDTDDEGAKSDDSK) are compositionally biased toward basic and acidic residues. The prenyltransferase stretch occupies residues 415–778 (KENEDTDDEG…LRLLLKRLQV (364 aa)). Residues 416–454 (ENEDTDDEGAKSDDSKTTLNDSTDSTVVDVKTPATSGLL) form a disordered region. The isopentenyl diphosphate site is built by Lys499, Arg502, and His531. Asp538 and Asp542 together coordinate Mg(2+). The DDXXD 2 motif lies at 538-542 (DDIED). Dimethylallyl diphosphate is bound at residue Arg547. Isopentenyl diphosphate is bound at residue Arg548. Residues Lys625, Thr626, Gln662, Asn669, Lys679, and Lys689 each contribute to the dimethylallyl diphosphate site.

It in the N-terminal section; belongs to the terpene synthase family. The protein in the C-terminal section; belongs to the FPP/GGPP synthase family. In terms of assembly, hexamer. Mg(2+) serves as cofactor.

The catalysed reaction is isopentenyl diphosphate + (2E,6E)-farnesyl diphosphate = (2E,6E,10E)-geranylgeranyl diphosphate + diphosphate. It catalyses the reaction isopentenyl diphosphate + (2E,6E,10E)-geranylgeranyl diphosphate = (2E,6E,10E,14E)-geranylfarnesyl diphosphate + diphosphate. The enzyme catalyses (2E,6E,10E,14E)-geranylfarnesyl diphosphate = preasperterpenoid A + diphosphate. The protein operates within secondary metabolite biosynthesis; terpenoid biosynthesis. Its function is as follows. Bifunctional sesterterpene synthase that possesses both prenyl transferase and terpene cyclase activity, converting isopentenyl diphosphate and dimethylallyl diphosphate into geranylfarnesyl diphosphate (GFPP) and further converting GFPP into preasperterpenoid A. In Talaromyces verruculosus (Penicillium verruculosum), this protein is Preasperterpenoid A synthase PvPS.